Here is a 62-residue protein sequence, read N- to C-terminus: Photosystem II reaction center protein Z (62 aa).

2 helical membrane passes run 8–28 (AVFA…VVFA) and 41–61 (FSGT…NSLI).

Belongs to the PsbZ family. As to quaternary structure, PSII is composed of 1 copy each of membrane proteins PsbA, PsbB, PsbC, PsbD, PsbE, PsbF, PsbH, PsbI, PsbJ, PsbK, PsbL, PsbM, PsbT, PsbY, PsbZ, Psb30/Ycf12, at least 3 peripheral proteins of the oxygen-evolving complex and a large number of cofactors. It forms dimeric complexes.

The protein localises to the plastid. It is found in the chloroplast thylakoid membrane. May control the interaction of photosystem II (PSII) cores with the light-harvesting antenna, regulates electron flow through the 2 photosystem reaction centers. PSII is a light-driven water plastoquinone oxidoreductase, using light energy to abstract electrons from H(2)O, generating a proton gradient subsequently used for ATP formation. The protein is Photosystem II reaction center protein Z of Jasminum nudiflorum (Winter jasmine).